A 249-amino-acid polypeptide reads, in one-letter code: Enolase-phosphatase E1 (249 aa).

Mg(2+)-binding residues include D14 and E16. Substrate is bound by residues 141–142 (SS) and K175. D200 is a Mg(2+) binding site.

It belongs to the HAD-like hydrolase superfamily. MasA/MtnC family. In terms of assembly, monomer. Mg(2+) serves as cofactor.

It localises to the cytoplasm. Its subcellular location is the nucleus. The catalysed reaction is 5-methylsulfanyl-2,3-dioxopentyl phosphate + H2O = 1,2-dihydroxy-5-(methylsulfanyl)pent-1-en-3-one + phosphate. It participates in amino-acid biosynthesis; L-methionine biosynthesis via salvage pathway; L-methionine from S-methyl-5-thio-alpha-D-ribose 1-phosphate: step 3/6. The protein operates within amino-acid biosynthesis; L-methionine biosynthesis via salvage pathway; L-methionine from S-methyl-5-thio-alpha-D-ribose 1-phosphate: step 4/6. In terms of biological role, bifunctional enzyme that catalyzes the enolization of 2,3-diketo-5-methylthiopentyl-1-phosphate (DK-MTP-1-P) into the intermediate 2-hydroxy-3-keto-5-methylthiopentenyl-1-phosphate (HK-MTPenyl-1-P), which is then dephosphorylated to form the acireductone 1,2-dihydroxy-3-keto-5-methylthiopentene (DHK-MTPene). In Drosophila mojavensis (Fruit fly), this protein is Enolase-phosphatase E1.